A 162-amino-acid chain; its full sequence is Balbiani ring protein 2 (162 aa).

Residues 1-31 are last constant region; that stretch reads CDDAMRKTESDKCTNIGGKFDPSTCKCTPET. The interval 32–51 is last Cys-1 repeat; that stretch reads VTEGPTTCLESSESDEVTTK. Residues 52–162 are unique region; it reads KPCDCTCAPD…VKGLEDILNS (111 aa).

Salivary gland.

It is found in the secreted. In terms of biological role, used by the larvae to construct a supramolecular structure, the larval tube. The polypeptide is Balbiani ring protein 2 (BR2) (Chironomus pallidivittatus (Midge)).